Consider the following 494-residue polypeptide: Sucrose-6-phosphate hydrolase (494 aa).

Substrate contacts are provided by residues 45-48 (LLND), Q64, 107-108 (YS), 168-169 (RD), and E223. D48 is a catalytic residue.

Belongs to the glycosyl hydrolase 32 family.

It catalyses the reaction Hydrolysis of terminal non-reducing beta-D-fructofuranoside residues in beta-D-fructofuranosides.. It functions in the pathway glycan biosynthesis; sucrose metabolism. This chain is Sucrose-6-phosphate hydrolase (scrB), found in Staphylococcus xylosus.